A 337-amino-acid polypeptide reads, in one-letter code: Glyceraldehyde-3-phosphate dehydrogenase (337 aa).

NAD(+)-binding positions include 11-12, aspartate 33, and lysine 78; that span reads RI. Residues 149-151, threonine 180, 209-210, and arginine 232 contribute to the D-glyceraldehyde 3-phosphate site; these read SCT and TG. Residue cysteine 150 is the Nucleophile of the active site. An NAD(+)-binding site is contributed by asparagine 314.

It belongs to the glyceraldehyde-3-phosphate dehydrogenase family. Homotetramer.

It is found in the cytoplasm. It catalyses the reaction D-glyceraldehyde 3-phosphate + phosphate + NAD(+) = (2R)-3-phospho-glyceroyl phosphate + NADH + H(+). It participates in carbohydrate degradation; glycolysis; pyruvate from D-glyceraldehyde 3-phosphate: step 1/5. The sequence is that of Glyceraldehyde-3-phosphate dehydrogenase (GPD) from Lyophyllum shimeji (Hon-shimeji).